The sequence spans 321 residues: Chloroplastic calcium uniporter protein (321 aa).

The N-terminal 56 residues, 1-56, are a transit peptide targeting the chloroplast; the sequence is MSSKKSLVQSLFNISKTYSRISGLTRMRPTKSGGIPPDAGDSGIRRRFLHKRAFFS. 2 helical membrane-spanning segments follow: residues 223–243 and 249–269; these read LWAG…LTFW and VMEP…YAFF. Residues 247–255 carry the Selectivity filter motif; it reads WDVMEPICF. Glutamate 251 is a Ca(2+) binding site.

This sequence belongs to the MCU (TC 1.A.77) family.

The protein resides in the plastid. Its subcellular location is the chloroplast membrane. The catalysed reaction is Ca(2+)(in) = Ca(2+)(out). Chloroplastic membrane calcium uniporter that mediates calcium uptake into chloroplast stroma. Constitutes a pore-forming and calcium-conducting subunit. Chloroplastic calcium homeostasis plays key roles in cellular physiology. Promotes calcium uptake into chloroplast stroma in response to osmotic-stress, fine-tuning cytosolic MAPK3/MAPK6 phosphorylation and affecting stomata opening. In Arabidopsis thaliana (Mouse-ear cress), this protein is Chloroplastic calcium uniporter protein.